Consider the following 127-residue polypeptide: MRYGEKEIKEFDVENMEIWPNDAKNDYIIKITLPEFMCCCPRSGYPDFATIYLEYMPNKFVVELKAIKLYINTFMYRNVSHEASINEIYNTLKDKLKPKWIKVVGDFNPRGNVHTVIECRSDMVVPK.

C40 (thioimide intermediate) is an active-site residue. The Proton donor role is filled by D47. Residues 62–64 (VEL) and 81–82 (HE) each bind substrate.

It belongs to the GTP cyclohydrolase I family. QueF type 1 subfamily.

It localises to the cytoplasm. The catalysed reaction is 7-aminomethyl-7-carbaguanine + 2 NADP(+) = 7-cyano-7-deazaguanine + 2 NADPH + 3 H(+). The protein operates within tRNA modification; tRNA-queuosine biosynthesis. Its function is as follows. Catalyzes the NADPH-dependent reduction of 7-cyano-7-deazaguanine (preQ0) to 7-aminomethyl-7-deazaguanine (preQ1). This Campylobacter jejuni (strain RM1221) protein is NADPH-dependent 7-cyano-7-deazaguanine reductase.